A 199-amino-acid chain; its full sequence is Protein shisa-like-1 (199 aa).

The N-terminal stretch at 1 to 25 (MTSCGQQSLNVLAVLFSLLFSAVLS) is a signal peptide. Residues 26 to 97 (AHFRVCEPYT…SEGYMHNNYT (72 aa)) lie on the Extracellular side of the membrane. Residues Asn53 and Asn95 are each glycosylated (N-linked (GlcNAc...) asparagine). A helical transmembrane segment spans residues 98–118 (ALLGVWIYGFFVLMLLVLDLL). Residues 119–199 (YYSAMNYDIC…PLMTFQSSSA (81 aa)) lie on the Cytoplasmic side of the membrane. Positions 146-199 (PRRWGNPARAPRPGQRAPQPQPPPGPLPQAPQAVHTLRGDAHSPPLMTFQSSSA) are disordered. The segment covering 152–163 (PARAPRPGQRAP) has biased composition (low complexity). The segment covering 164-174 (QPQPPPGPLPQ) has biased composition (pro residues).

The protein belongs to the shisa family.

The protein localises to the membrane. The chain is Protein shisa-like-1 from Homo sapiens (Human).